The sequence spans 718 residues: GMP synthase [glutamine-hydrolyzing] (718 aa).

Residues 43–247 (VIVILDAGSQ…LIDICGCSAN (205 aa)) enclose the Glutamine amidotransferase type-1 domain. Catalysis depends on for GATase activity residues Cys128, His221, and Glu223. Positions 248–457 (YTLDDREQQA…LGLSDSLVWR (210 aa)) constitute a GMPS ATP-PPase domain. 275-281 (SGGVDST) contacts ATP.

As to quaternary structure, homodimer.

It carries out the reaction XMP + L-glutamine + ATP + H2O = GMP + L-glutamate + AMP + diphosphate + 2 H(+). It functions in the pathway purine metabolism; GMP biosynthesis; GMP from XMP (L-Gln route): step 1/1. This chain is GMP synthase [glutamine-hydrolyzing] (guaA), found in Dictyostelium discoideum (Social amoeba).